The following is a 792-amino-acid chain: Phenylalanine--tRNA ligase beta subunit (792 aa).

The region spanning 38–148 (NTKLAGFIVA…DDYKVGNKFF (111 aa)) is the tRNA-binding domain. Residues 406 to 482 (EADTKVSFDY…RIYGYDKIKE (77 aa)) form the B5 domain. Mg(2+)-binding residues include Asp460, Asp466, Glu469, and Glu470. The FDX-ACB domain maps to 698-790 (YKHQSVKRDF…VHKNTGGILR (93 aa)).

This sequence belongs to the phenylalanyl-tRNA synthetase beta subunit family. Type 1 subfamily. In terms of assembly, tetramer of two alpha and two beta subunits. Mg(2+) is required as a cofactor.

Its subcellular location is the cytoplasm. It carries out the reaction tRNA(Phe) + L-phenylalanine + ATP = L-phenylalanyl-tRNA(Phe) + AMP + diphosphate + H(+). The polypeptide is Phenylalanine--tRNA ligase beta subunit (Wolbachia sp. subsp. Brugia malayi (strain TRS)).